A 150-amino-acid polypeptide reads, in one-letter code: Lipoprotein signal peptidase (150 aa).

Helical transmembrane passes span 59–79 (VFVGVTVLVAIIILAAYRYLP) and 84–101 (LLRLSLALMLGGALGNLI). Catalysis depends on residues Asp111 and Asp125. Residues 117–137 (IWPVFNLADMAIVFGVIILCW) traverse the membrane as a helical segment.

Belongs to the peptidase A8 family.

It is found in the cell membrane. The catalysed reaction is Release of signal peptides from bacterial membrane prolipoproteins. Hydrolyzes -Xaa-Yaa-Zaa-|-(S,diacylglyceryl)Cys-, in which Xaa is hydrophobic (preferably Leu), and Yaa (Ala or Ser) and Zaa (Gly or Ala) have small, neutral side chains.. The protein operates within protein modification; lipoprotein biosynthesis (signal peptide cleavage). Functionally, this protein specifically catalyzes the removal of signal peptides from prolipoproteins. The protein is Lipoprotein signal peptidase of Moorella thermoacetica (strain ATCC 39073 / JCM 9320).